Reading from the N-terminus, the 935-residue chain is Isoleucine--tRNA ligase (935 aa).

The 'HIGH' region signature appears at 58 to 68 (PYANGSIHVGH). An L-isoleucyl-5'-AMP-binding site is contributed by E558. Positions 599–603 (KMSKS) match the 'KMSKS' region motif. Residue K602 coordinates ATP. Zn(2+) contacts are provided by C897, C900, C917, and C920.

Belongs to the class-I aminoacyl-tRNA synthetase family. IleS type 1 subfamily. As to quaternary structure, monomer. The cofactor is Zn(2+).

It localises to the cytoplasm. The enzyme catalyses tRNA(Ile) + L-isoleucine + ATP = L-isoleucyl-tRNA(Ile) + AMP + diphosphate. Catalyzes the attachment of isoleucine to tRNA(Ile). As IleRS can inadvertently accommodate and process structurally similar amino acids such as valine, to avoid such errors it has two additional distinct tRNA(Ile)-dependent editing activities. One activity is designated as 'pretransfer' editing and involves the hydrolysis of activated Val-AMP. The other activity is designated 'posttransfer' editing and involves deacylation of mischarged Val-tRNA(Ile). In Francisella tularensis subsp. tularensis (strain SCHU S4 / Schu 4), this protein is Isoleucine--tRNA ligase.